Reading from the N-terminus, the 443-residue chain is Chromosomal replication initiator protein DnaA (443 aa).

The segment at 1–73 (MYGDHRQIWE…YDAASKATNK (73 aa)) is domain I, interacts with DnaA modulators. The tract at residues 73–106 (KLYEIKILSEDEEEYREIKESIEKENLTESTTLS) is domain II. The interval 107 to 323 (TLNPKYTFDT…GALIRIVAFS (217 aa)) is domain III, AAA+ region. ATP-binding residues include Gly151, Gly153, Lys154, and Thr155. The domain IV, binds dsDNA stretch occupies residues 324–443 (NLTKANIDLE…EELKKRIKGY (120 aa)).

Belongs to the DnaA family. In terms of assembly, oligomerizes as a right-handed, spiral filament on DNA at oriC.

The protein localises to the cytoplasm. In terms of biological role, plays an essential role in the initiation and regulation of chromosomal replication. ATP-DnaA binds to the origin of replication (oriC) to initiate formation of the DNA replication initiation complex once per cell cycle. Binds the DnaA box (a 9 base pair repeat at the origin) and separates the double-stranded (ds)DNA. Forms a right-handed helical filament on oriC DNA; dsDNA binds to the exterior of the filament while single-stranded (ss)DNA is stabiized in the filament's interior. The ATP-DnaA-oriC complex binds and stabilizes one strand of the AT-rich DNA unwinding element (DUE), permitting loading of DNA polymerase. After initiation quickly degrades to an ADP-DnaA complex that is not apt for DNA replication. Binds acidic phospholipids. This chain is Chromosomal replication initiator protein DnaA, found in Thermoanaerobacter pseudethanolicus (strain ATCC 33223 / 39E) (Clostridium thermohydrosulfuricum).